Here is a 1167-residue protein sequence, read N- to C-terminus: MKNWTAEQMRAITSRGNALLVSAAAGAGKTSVLVERVLSRVLTDTPPVDIDRLLVVTFTEAAAGEMKERLGTELLKRLNEDPGNSRILEQLELLPVADISTLHSFCHKIIRKYGRVCGYETKFAILEGPRETYLKNKVLEEILEERYEKGDRELFALLEYLNDEKNDRNLKELILNLYHFSRSNPEPEKWLLDSLNLFNGNWERFEDTFWYREIKSSTEMWLEYILELLGRAKSVAEKYGQARAFSLLAEDMEKVRGLYAKLNEGYEAAKQYLSQVKFGTFSWGRGVGGKDEAKDLRDKAKEQFETIKKRYFSWEAGNFREELRTLTSYLDPLVKLVREFSRKYQEEKRKHGFADFSDLEHWALDILKSGVYRELREKYVEILVDEYQDINGLQEEILTYVSRDGQNLFMVGDVKQSIYRFRWARPEIFLKKYEDFTDEKKIELSLNFRSREEIIATVNFIFKQIMKKRVAELSYDEKAFLKKGADYLPNANCFAELHLIEGKPEEDINSNGEPEEDLTAVHREARLVAAKILKLKEEGFKVFDRETKEFRPLQYRDIVILSRSLSNSSNIWQEELTRAGIPVYVEGAGSFLNSKEILLMTSFLKVIDNPCQDVPLAAVLCSPVAGLTYEELWQVRKEYPEGLLYDALKNKSLGKDELSVKSQKFLELLVEFQKLSRQISLAELVNEIYRKTNLPEIFGAYPGGEVRQANLKLLHDLAVDFAEINGGGIYNFLTFLSQAAESEDFSPAKLIGEADDVVRVMSVHKSKGLEFPVVFVVGLGKRFKFDYSNTVFLHSDLGFGPKFFDPEKRIRRHSIASQILSERMRRETLAEEMRILYVALTRAREKLILVGTVKNLAKKMAGWQSQTEALKDTLSDGQIARAGNFLDWIGPVVFREGSDLPDCLKVEVHPQQEKIEGEQWELPEVLRVKLLTKTPFTEETDYTGQFRAGLEFNYPGLKIAKLPAKMSVSDLKEVFSTDDVISLEDEDEVFLPGVYFEDGAMLGIVYHEFLRRIDFQGDLSASGLKAQGETLVAEGVLPPESREMLDFTKIARIFATPLGQRILRAREIYPEFPFTLGVKAGEIYPEATGFSEKILVRGVIDLLALEEDGFFIVDWKTDRVTGDILNERLKEYAGQLNLYARAVEEITGKKVKEKYLYFINLEKEVRV.

The UvrD-like helicase ATP-binding domain occupies Lys-2 to Arg-451. Residue Ala-23 to Thr-30 coordinates ATP. One can recognise a UvrD-like helicase C-terminal domain in the interval Lys-478–Gly-768.

Belongs to the helicase family. AddA subfamily. As to quaternary structure, heterodimer of AddA and AddB/RexB. The cofactor is Mg(2+).

It catalyses the reaction Couples ATP hydrolysis with the unwinding of duplex DNA by translocating in the 3'-5' direction.. It carries out the reaction ATP + H2O = ADP + phosphate + H(+). The heterodimer acts as both an ATP-dependent DNA helicase and an ATP-dependent, dual-direction single-stranded exonuclease. Recognizes the chi site generating a DNA molecule suitable for the initiation of homologous recombination. The AddA nuclease domain is required for chi fragment generation; this subunit has the helicase and 3' -&gt; 5' nuclease activities. This chain is ATP-dependent helicase/nuclease subunit A, found in Carboxydothermus hydrogenoformans (strain ATCC BAA-161 / DSM 6008 / Z-2901).